Reading from the N-terminus, the 144-residue chain is High mobility group B protein 2 (144 aa).

2 stretches are compositionally biased toward basic and acidic residues: residues 1–12 (MKGAKSKTETRS) and 73–94 (AGDK…KAEK). 3 disordered regions span residues 1 to 42 (MKGA…KRPA), 57 to 94 (KKEN…KAEK), and 106 to 144 (YNKK…EDDD). A DNA-binding region (HMG box) is located at residues 38-107 (PKRPASAFFV…EYEKNIKAYN (70 aa)). At S125 the chain carries Phosphoserine. A compositionally biased stretch (acidic residues) spans 127–144 (VNDEDDAEDGSEEEEDDD).

This sequence belongs to the HMGB family. In terms of tissue distribution, mostly expressed in cotyledons, hypocotyls, leaves, and flowers (excluding pedicels), also present in roots and stems.

Its subcellular location is the nucleus. It localises to the cytoplasm. The protein resides in the cytosol. In terms of biological role, binds preferentially double-stranded DNA. Confers sensitivity to salt and drought stresses. The sequence is that of High mobility group B protein 2 (HMGB2) from Arabidopsis thaliana (Mouse-ear cress).